A 120-amino-acid chain; its full sequence is Inner membrane protein YidG (120 aa).

The Cytoplasmic portion of the chain corresponds to 1–21 (MPDSRKARRIADPGLQPERTS). The chain crosses the membrane as a helical span at residues 22-39 (LAWFRTMLGYGALMALAI). Topologically, residues 40–48 (KHNWHQAGM) are periplasmic. The helical transmembrane segment at 49–68 (LFWISIGILAIVALILWHYT) threads the bilayer. Residues 69–90 (RNRNLMDVTNSDFSQFHVVRDK) are Cytoplasmic-facing. A helical transmembrane segment spans residues 91–113 (FLISLAVLSLAILFAVTHIHQLI). The Periplasmic segment spans residues 114-120 (VFIERVA).

Its subcellular location is the cell inner membrane. In Escherichia coli O157:H7, this protein is Inner membrane protein YidG (yidG).